Consider the following 424-residue polypeptide: 3-ketoacyl-CoA thiolase B, peroxisomal (424 aa).

A peroxisome-targeting transit peptide spans 1–26; sequence MHRLQVVLGHLAGRPESSSALQAAPC. A PTS2-type peroxisomal targeting signal region spans residues 1 to 26; that stretch reads MHRLQVVLGHLAGRPESSSALQAAPC. Cys123 (acyl-thioester intermediate) is an active-site residue. Lys173 and Lys234 each carry N6-acetyllysine. Positions 249, 252, and 276 each coordinate CoA. Cys408 serves as the catalytic Proton donor/acceptor.

This sequence belongs to the thiolase-like superfamily. Thiolase family. In terms of assembly, homodimer. Interacts (via PTS2-type peroxisomal targeting signal region) with PEX7; leading to its translocation into peroxisomes. In terms of tissue distribution, mainly expressed in liver; weaker levels in kidney, intestine and white adipose tissue.

The protein resides in the peroxisome. The catalysed reaction is an acyl-CoA + acetyl-CoA = a 3-oxoacyl-CoA + CoA. It catalyses the reaction 2 acetyl-CoA = acetoacetyl-CoA + CoA. It carries out the reaction hexanoyl-CoA + acetyl-CoA = 3-oxooctanoyl-CoA + CoA. The enzyme catalyses tetradecanoyl-CoA + acetyl-CoA = 3-oxohexadecanoyl-CoA + CoA. The catalysed reaction is 3-oxohexadecanedioyl-CoA + CoA = tetradecanedioyl-CoA + acetyl-CoA. It catalyses the reaction 3-oxo-(6Z,9Z,12Z,15Z,18Z,21Z)-tetracosahexaenoyl-CoA + CoA = (4Z,7Z,10Z,13Z,16Z,19Z)-docosahexaenoyl-CoA + acetyl-CoA. The protein operates within lipid metabolism; peroxisomal fatty acid beta-oxidation. Responsible for the thiolytic cleavage of straight chain 3-keto fatty acyl-CoAs (3-oxoacyl-CoAs). Plays an important role in fatty acid peroxisomal beta-oxidation. Catalyzes the cleavage of short, medium, long, and very long straight chain 3-oxoacyl-CoAs. The protein is 3-ketoacyl-CoA thiolase B, peroxisomal of Mus musculus (Mouse).